Consider the following 528-residue polypeptide: Calcium-dependent protein kinase 4 (528 aa).

Residues 1–16 (MGQEMSTQSDMQNENQ) show a composition bias toward polar residues. Residues 1–36 (MGQEMSTQSDMQNENQKGNKRNLKGSQGKNGLKERS) form a disordered region. Gly-2 carries N-myristoyl glycine lipidation. A Protein kinase domain is found at 70-328 (YKGIKILGKG…ARDALEHEWI (259 aa)). ATP contacts are provided by residues 76–84 (LGKGSFGEV) and Lys-99. Residue Asp-193 is the Proton acceptor of the active site. The short motif at 350–358 (NIKQFQSTQ) is the J domain autoinhibitory motif element. The segment at 350 to 386 (NIKQFQSTQKLAQAALLYMGSKLTTIDETKELTKIFK) is j domain. A J domain EF-hand interaction motif motif is present at residues 359–368 (KLAQAALLYM). 4 EF-hand domains span residues 376–411 (DETKELTKIFKKMDKNGDGQLDRNELIIGYKELLKL), 423–458 (AIEVEVDQILSSIDLDQNGYIEYSEFLTVAIDRKLL), 459–494 (LSTERLEKAFKLFDKDGSGKISANELAQLFGLGDVS), and 498–528 (WKTVLKEVDQNNDGEIDFKEFRDMLIKLCNY). 20 residues coordinate Ca(2+): Asp-389, Asn-391, Asp-393, Gln-395, Glu-400, Asp-436, Asp-438, Asn-440, Tyr-442, Glu-447, Asp-472, Asp-474, Ser-476, Lys-478, Glu-483, Asp-506, Asn-508, Asp-510, Glu-512, and Glu-517.

Belongs to the protein kinase superfamily. Ser/Thr protein kinase family. CDPK subfamily. May interact with the pre-replication MCM complex prior male gametogenesis activation. Mg(2+) serves as cofactor. Post-translationally, myristoylated; myristoylation may target it to different subcellular compartments. During male gametogenesis, myristoylation is required to initiate DNA replication but not for mitotic spindle assembly or axoneme activation. Not palmitoylated. In terms of processing, may be autophosphorylated on Thr-234 in vitro.

It is found in the cytoplasm. It localises to the membrane. The protein resides in the chromosome. It catalyses the reaction L-seryl-[protein] + ATP = O-phospho-L-seryl-[protein] + ADP + H(+). The enzyme catalyses L-threonyl-[protein] + ATP = O-phospho-L-threonyl-[protein] + ADP + H(+). Activated by calcium. Upon calcium binding to the EF-hand domains, the C-terminus of the junction domain (J domain) undergoes a conformational change which results in the dissociation of the pseudo-substrate inhibitory motif from the catalytic domain. This, in turn, may facilitate the autophosphorylation of the activation loop at Thr-234, which leads to the kinase activation. Intracellular calcium increase is triggered by xanthurenic acid (XA), a small mosquito molecule that induces the differentiation of specialized transmission stages, the gametocytes, into male and female gametes. Activated by a decrease in temperature (20 degrees Celsius) and an increase in pH (7.6) occurring when the parasite is ingested by in the mosquito. In terms of biological role, calcium-dependent protein kinase which acts as a sensor and effector of intracellular Ca(2+) levels probably in part downstream of cGMP-activated PKG kinase. Plays a central role in the host erythrocytes and hepatocytes infection cycles, sexual reproduction and mosquito transmission of the parasite. During the liver stage, involved in sporozoite motility and thus in sporozoite invasion of host hepatocytes, probably together with CDPK1 and CDPK5. Involved in merosome egress from host hepatocytes, probably together with CDPK5. During the asexual blood stage, involved in merozoite invasion of host erythrocytes and motility by stabilizing the inner membrane complex, a structure below the plasma membrane which acts as an anchor for the glidosome, an acto-myosin motor. Required for cell cycle progression in the male gametocyte. During male gametogenesis in the mosquito gut, required to initiate the first round of DNA replication, probably by facilitating the assembly of the pre-replicative MCM complex, to assemble the first mitotic spindle and, at the end of gametogenesis, to initiate axoneme motility, cytokinesis and subsequent exflagellation. For each of these steps, may phosphorylate SOC1, SOC2 and SOC3, respectively. Together with CDPK1, regulates ookinete gliding in the mosquito host midgut. Its function is as follows. During male gametogenesis in the mosquito gut, required to initiate the first round of DNA replication, probably by facilitating the assembly of the pre-replicative MCM complex, and to assemble the first mitotic spindle. At the end of male gametogenesis in the mosquito gut, required to initiate axoneme motility, cytokinesis and subsequent exflagellation. This is Calcium-dependent protein kinase 4 from Plasmodium berghei (strain Anka).